Consider the following 127-residue polypeptide: Large ribosomal subunit protein bL17 (127 aa).

It belongs to the bacterial ribosomal protein bL17 family. As to quaternary structure, part of the 50S ribosomal subunit. Contacts protein L32.

The polypeptide is Large ribosomal subunit protein bL17 (Leuconostoc citreum (strain KM20)).